The following is a 1222-amino-acid chain: MLFNINEKGEPLVISFAPFLSPEAIKHLQENERCSDQSQKRTAQQIEAIYTSGQNILVSASAGSGKTFVMVERILDKILRGVSIDRLFISTFTVKAATELRERIENKLYSQIAQTTDFQMKVYLTEQLQSLCQADIGTMDAFAQKVVSRYGYSIGISSQFRIMQDKAEQGVLKQEVFSKLFSEFMNQKEAPVFRALVKNFSGNCKDTSAFRELVYTCYSFSQSTENPKIWLQENFLSAAKTYQRLEDIPDHDIELLLLAMQDTANQLRDVTDMEDYGQLTKAGSRSAKYTKHLTIIEKLSDWVRDFKCLYGKAGLDRLIRDVTGLIPSGNYVTVSKVKYPVFKTLHQKLKQFRHLETILMYQKDCFPLLEQLQDFVLAFSEAYLAVKIQESAFEFSDIAHFAIKILEENTDIRQSYQQHYHEVMVDEYQDNNHMQERLLTLLSNGHNRFMVGDIKQSIYRFRQADPQIFNQKFRDYQKKPEQGKVILLKENFRSQSEVLNVSNAVFSHLMDESVGDVLYDEQHQLIAGSHAQTVPYLDRRAQLLLYNSDKDDGNAPSDSEGISFSEVTIVAKEIIKLHNDKGVPFEDITLLVSSRTRNDIISHTFNQYGIPIVTDGGQQNYLKSVEVMVMLDTLRTINNPRNDYALVALLRSPMFAFDEDDLARIALQKDNELDKDCLYDKIQRAVIGRGAHPELIHDTLLGKLNVFLKTLKSWRRYAKLGSLYDLIWKIFNDRFYFDFVASQAKAEQAQANLYALALRANQFEKSGYKGLYRFIKMIDKVLETQNDLADVEVAAPKQAVNLMTIHKSKGLQFPYVFILNCDKRFSMTDIHKSFILNRQHGIGIKYLADIKGLLGETTLNSVKVSMETLPYQLNKQELRLATLSEQMRLLYVAMTRAEKKVYFIGKASKSKSQEITDPKKLDKLLPLALREQLLTFQDWLLAIADIFSTEDLYFDVRFIEDSDLTQESVGRLQTPQLLNPDDLKDNRQSETIARALDMLEAVSQLNANYEAAIHLPTVRTPSQLKAAYEPLLEPIGVDIIEKSSRSLSDFTLPHFSKKAKVEASHIGSALHQLMQVLPLSKPINQQTLLDALRGIDSNEEVKTALDLKKIESFFCDTSLGQFFQTYQKHLYREAPFAILKVDPISQEEYVLRGIIDAYFLFDDHIVLVDYKTDKYKQPIELKKRYQQQLELYAEALTQTYKLPVTKRYLVLMGGGKPEIVEV.

The region spanning 39-495 (QKRTAQQIEA…ILLKENFRSQ (457 aa)) is the UvrD-like helicase ATP-binding domain. 60-67 (ASAGSGKT) contacts ATP. A UvrD-like helicase C-terminal domain is found at 524–810 (QLIAGSHAQT…NLMTIHKSKG (287 aa)).

Belongs to the helicase family. AddA subfamily. As to quaternary structure, heterodimer of AddA and AddB/RexB. Mg(2+) serves as cofactor.

It catalyses the reaction Couples ATP hydrolysis with the unwinding of duplex DNA by translocating in the 3'-5' direction.. The enzyme catalyses ATP + H2O = ADP + phosphate + H(+). The heterodimer acts as both an ATP-dependent DNA helicase and an ATP-dependent, dual-direction single-stranded exonuclease. Recognizes the chi site generating a DNA molecule suitable for the initiation of homologous recombination. The AddA nuclease domain is required for chi fragment generation; this subunit has the helicase and 3' -&gt; 5' nuclease activities. This is ATP-dependent helicase/nuclease subunit A from Streptococcus pyogenes serotype M4 (strain MGAS10750).